The chain runs to 154 residues: Thioredoxin-like protein CXXS2 (154 aa).

A Thioredoxin domain is found at 23–148 (RRNKTQARSQ…LQKKTAAAAN (126 aa)). A Phosphoserine modification is found at S31.

It belongs to the thioredoxin family. Ubiquitous.

The protein localises to the cytoplasm. In terms of biological role, possesses low disulfide reductase activity, but efficient protein disulfide isomerase activity. Does not possess deglutathionylation activity. In Arabidopsis thaliana (Mouse-ear cress), this protein is Thioredoxin-like protein CXXS2 (CXXS2).